Consider the following 151-residue polypeptide: Small ribosomal subunit protein uS13m (151 aa).

Belongs to the universal ribosomal protein uS13 family. In terms of assembly, component of the mitochondrial small ribosomal subunit (mt-SSU). Mature yeast 74S mitochondrial ribosomes consist of a small (37S) and a large (54S) subunit. The 37S small subunit contains a 15S ribosomal RNA (15S mt-rRNA) and at least 32 different proteins. The 54S large subunit contains a 21S rRNA (21S mt-rRNA) and at least 45 different proteins.

It is found in the mitochondrion. Functionally, component of the mitochondrial ribosome (mitoribosome), a dedicated translation machinery responsible for the synthesis of mitochondrial genome-encoded proteins, including at least some of the essential transmembrane subunits of the mitochondrial respiratory chain. The mitoribosomes are attached to the mitochondrial inner membrane and translation products are cotranslationally integrated into the membrane. The polypeptide is Small ribosomal subunit protein uS13m (sws2) (Schizosaccharomyces pombe (strain 972 / ATCC 24843) (Fission yeast)).